The chain runs to 314 residues: PDZ domain-containing protein GIPC2 (314 aa).

The segment covering 1–12 (MPLGLRGKKKAA) has biased composition (basic residues). The tract at residues 1-36 (MPLGLRGKKKAAKSKEAARLVEGERSSGSQGVPGPP) is disordered. The segment covering 13–25 (KSKEAARLVEGER) has biased composition (basic and acidic residues). The 81-residue stretch at 117 to 197 (EVNVYKSEDS…EELFTLQLIE (81 aa)) folds into the PDZ domain.

This sequence belongs to the GIPC family. As to quaternary structure, probably interacts with SEMA5A. As to expression, expressed in kidney and lung (at protein level).

The protein resides in the cytoplasm. This Mus musculus (Mouse) protein is PDZ domain-containing protein GIPC2 (Gipc2).